The sequence spans 345 residues: Holliday junction branch migration complex subunit RuvB (345 aa).

The interval 4–194 (TDKLFGAAPE…FGIVARLEFY (191 aa)) is large ATPase domain (RuvB-L). Residues Leu-33, Arg-34, Gly-75, Lys-78, Thr-79, Thr-80, 141 to 143 (EDY), Arg-184, Tyr-194, and Arg-231 contribute to the ATP site. Thr-79 provides a ligand contact to Mg(2+). Residues 195-265 (NAEELTRIVS…VADAALAMLD (71 aa)) form a small ATPAse domain (RuvB-S) region. Positions 268 to 345 (PAGLDVMDRK…LHFGLPVKDA (78 aa)) are head domain (RuvB-H). DNA is bound by residues Arg-323 and Arg-328.

The protein belongs to the RuvB family. In terms of assembly, homohexamer. Forms an RuvA(8)-RuvB(12)-Holliday junction (HJ) complex. HJ DNA is sandwiched between 2 RuvA tetramers; dsDNA enters through RuvA and exits via RuvB. An RuvB hexamer assembles on each DNA strand where it exits the tetramer. Each RuvB hexamer is contacted by two RuvA subunits (via domain III) on 2 adjacent RuvB subunits; this complex drives branch migration. In the full resolvosome a probable DNA-RuvA(4)-RuvB(12)-RuvC(2) complex forms which resolves the HJ.

The protein resides in the cytoplasm. The enzyme catalyses ATP + H2O = ADP + phosphate + H(+). In terms of biological role, the RuvA-RuvB-RuvC complex processes Holliday junction (HJ) DNA during genetic recombination and DNA repair, while the RuvA-RuvB complex plays an important role in the rescue of blocked DNA replication forks via replication fork reversal (RFR). RuvA specifically binds to HJ cruciform DNA, conferring on it an open structure. The RuvB hexamer acts as an ATP-dependent pump, pulling dsDNA into and through the RuvAB complex. RuvB forms 2 homohexamers on either side of HJ DNA bound by 1 or 2 RuvA tetramers; 4 subunits per hexamer contact DNA at a time. Coordinated motions by a converter formed by DNA-disengaged RuvB subunits stimulates ATP hydrolysis and nucleotide exchange. Immobilization of the converter enables RuvB to convert the ATP-contained energy into a lever motion, pulling 2 nucleotides of DNA out of the RuvA tetramer per ATP hydrolyzed, thus driving DNA branch migration. The RuvB motors rotate together with the DNA substrate, which together with the progressing nucleotide cycle form the mechanistic basis for DNA recombination by continuous HJ branch migration. Branch migration allows RuvC to scan DNA until it finds its consensus sequence, where it cleaves and resolves cruciform DNA. The sequence is that of Holliday junction branch migration complex subunit RuvB from Chromobacterium violaceum (strain ATCC 12472 / DSM 30191 / JCM 1249 / CCUG 213 / NBRC 12614 / NCIMB 9131 / NCTC 9757 / MK).